A 481-amino-acid chain; its full sequence is Aspartyl/glutamyl-tRNA(Asn/Gln) amidotransferase subunit B (481 aa).

Belongs to the GatB/GatE family. GatB subfamily. Heterotrimer of A, B and C subunits.

The enzyme catalyses L-glutamyl-tRNA(Gln) + L-glutamine + ATP + H2O = L-glutaminyl-tRNA(Gln) + L-glutamate + ADP + phosphate + H(+). The catalysed reaction is L-aspartyl-tRNA(Asn) + L-glutamine + ATP + H2O = L-asparaginyl-tRNA(Asn) + L-glutamate + ADP + phosphate + 2 H(+). Functionally, allows the formation of correctly charged Asn-tRNA(Asn) or Gln-tRNA(Gln) through the transamidation of misacylated Asp-tRNA(Asn) or Glu-tRNA(Gln) in organisms which lack either or both of asparaginyl-tRNA or glutaminyl-tRNA synthetases. The reaction takes place in the presence of glutamine and ATP through an activated phospho-Asp-tRNA(Asn) or phospho-Glu-tRNA(Gln). The chain is Aspartyl/glutamyl-tRNA(Asn/Gln) amidotransferase subunit B from Pseudomonas syringae pv. tomato (strain ATCC BAA-871 / DC3000).